Reading from the N-terminus, the 267-residue chain is Apolipoprotein A-I (267 aa).

Residues Met1–Ala18 form the signal peptide. Repeat copies occupy residues Leu68–Gly89 and Pro90–Ser111. The 10 X approximate tandem repeats stretch occupies residues Leu68–Gln267. Met110 is modified (methionine sulfoxide). One copy of the 3; half-length repeat lies at Lys112–Gln122. Repeat copies occupy residues Pro123–Glu144, Pro145–Ser166, Pro167–Ala188, Pro189–Gly210, and Ala211–Lys232. Met136 is subject to Methionine sulfoxide. The 9; half-length repeat unit spans residues Pro233 to Leu243. Copy 10 of the repeat occupies Pro244–Gln267.

Belongs to the apolipoprotein A1/A4/E family. As to quaternary structure, homodimer. Interacts with APOA1BP and CLU. Component of a sperm activating protein complex (SPAP), consisting of APOA1, an immunoglobulin heavy chain, an immunoglobulin light chain and albumin. Interacts with NDRG1. Interacts with SCGB3A2. Interacts with NAXE and YJEFN3. Glycosylated. In terms of processing, palmitoylated. As to expression, major protein of plasma HDL, also found in chylomicrons.

Its subcellular location is the secreted. Participates in the reverse transport of cholesterol from tissues to the liver for excretion by promoting cholesterol efflux from tissues and by acting as a cofactor for the lecithin cholesterol acyltransferase (LCAT). As part of the SPAP complex, activates spermatozoa motility. The chain is Apolipoprotein A-I (APOA1) from Pongo abelii (Sumatran orangutan).